The sequence spans 241 residues: Bidirectional sugar transporter SWEET17 (241 aa).

Over 1–3 (MAE) the chain is Vacuolar. The chain crosses the membrane as a helical span at residues 4–24 (ASFYIGVIGNVISVLVFLSPV). In terms of domain architecture, MtN3/slv 1 spans 6-92 (FYIGVIGNVI…SLFLFYAPRH (87 aa)). Residues 25–41 (ETFWKIVKRRSTEEYKS) lie on the Cytoplasmic side of the membrane. The chain crosses the membrane as a helical span at residues 42-62 (LPYICTLLGSSLWTYYGIVTP). The Vacuolar segment spans residues 63–69 (GEYLVST). A helical transmembrane segment spans residues 70-90 (VNGFGALVETIYVSLFLFYAP). The Cytoplasmic segment spans residues 91–94 (RHLK). The chain crosses the membrane as a helical span at residues 95 to 115 (LKTVDVDAMLNVFFPIAAIVA). Residues 116–128 (TRSAFEDEKMRSQ) are Vacuolar-facing. A helical transmembrane segment spans residues 129 to 149 (SIGFISAGLNIIMYGSPLSAM). The 84-residue stretch at 129 to 212 (SIGFISAGLN…LILYGIYRNA (84 aa)) folds into the MtN3/slv 2 domain. At 150-161 (KTVVTTKSVKYM) the chain is on the cytoplasmic side. Residues 162–182 (PFWLSFFLFLNGAIWAVYALL) form a helical membrane-spanning segment. Topologically, residues 183 to 185 (QHD) are vacuolar. The helical transmembrane segment at 186–206 (VFLLVPNGVGFVFGTMQLILY) threads the bilayer. Over 207–241 (GIYRNAKPVGLSNGLSEIAQDEEEGLTSRVEPLLS) the chain is Cytoplasmic.

It belongs to the SWEET sugar transporter family. In terms of assembly, forms homooligomers and heterooligomers with SWEET1, SWEET2, SWEET3, SWEET4, SWEET6, SWEET7, SWEET8, SWEET9, SWEET11, SWEET12, SWEET13, SWEET15 and SWEET16. In terms of tissue distribution, expressed in leaves at low levels, mostly in xylem and parenchyma. Highly expressed in the cortex of roots, predominantly in tips and mature regions, especially in tonoplasts. Also accumulates in cotyledons, stems, flowers, and siliques.

Its subcellular location is the vacuole membrane. Functionally, acts as a vacuolar hexose transporter. Regulates fructose (Fru) homeostasis in leaves and roots by exporting/importing Fru through the tonoplast regarding metabolic demand. In Arabidopsis thaliana (Mouse-ear cress), this protein is Bidirectional sugar transporter SWEET17.